Reading from the N-terminus, the 269-residue chain is Undecaprenyl-diphosphatase (269 aa).

7 helical membrane passes run 41 to 61 (FATM…VFHY), 78 to 98 (GFNL…IGLL), 107 to 127 (LFSP…MIVI), 148 to 167 (SLLI…SRSA), 184 to 204 (AEFS…LSLL), 213 to 233 (LEWQ…LFVV), and 248 to 268 (FAYY…EKIV).

This sequence belongs to the UppP family.

The protein localises to the cell membrane. It carries out the reaction di-trans,octa-cis-undecaprenyl diphosphate + H2O = di-trans,octa-cis-undecaprenyl phosphate + phosphate + H(+). Its function is as follows. Catalyzes the dephosphorylation of undecaprenyl diphosphate (UPP). Confers resistance to bacitracin. In Thermoanaerobacter pseudethanolicus (strain ATCC 33223 / 39E) (Clostridium thermohydrosulfuricum), this protein is Undecaprenyl-diphosphatase.